The primary structure comprises 604 residues: Phenylalanine--tRNA ligase beta subunit (604 aa).

A B5 domain is found at 327 to 402 (YFQEKREVAH…LGRTLDRFSP (76 aa)). 4 residues coordinate Mg(2+): Asp380, Asp386, Glu389, and Glu390.

This sequence belongs to the phenylalanyl-tRNA synthetase beta subunit family. Type 2 subfamily. As to quaternary structure, tetramer of two alpha and two beta subunits. Mg(2+) serves as cofactor.

It is found in the cytoplasm. It carries out the reaction tRNA(Phe) + L-phenylalanine + ATP = L-phenylalanyl-tRNA(Phe) + AMP + diphosphate + H(+). The protein is Phenylalanine--tRNA ligase beta subunit of Treponema pallidum subsp. pallidum (strain SS14).